A 244-amino-acid polypeptide reads, in one-letter code: Heat stress transcription factor B-3 (244 aa).

A DNA-binding region spans residues 38-132 (PPPFLVKTYK…LMSNIRRRKS (95 aa)). Residues 173–218 (TSSSFVYTALLDENKCLKNENELLSCELGKTKKKCKQLMELVERYR) form a hydrophobic repeat HR-A/B region. Positions 202-208 (KTKKKCK) match the Nuclear localization signal motif. Positions 216-244 (RYRGEDEDATDESDDEEDEGLKLFGVKLE) are disordered. The segment covering 220–234 (EDEDATDESDDEEDE) has biased composition (acidic residues). The Nuclear export signal motif lies at 236-243 (LKLFGVKL).

The protein belongs to the HSF family. Class B subfamily. In terms of assembly, homotrimer. Post-translationally, exhibits temperature-dependent phosphorylation.

The protein localises to the cytoplasm. The protein resides in the nucleus. In terms of biological role, transcriptional regulator that specifically binds DNA sequence 5'-AGAAnnTTCT-3' known as heat shock promoter elements (HSE). The chain is Heat stress transcription factor B-3 (HSFB3) from Arabidopsis thaliana (Mouse-ear cress).